Consider the following 1133-residue polypeptide: Envelopment polyprotein (1133 aa).

The N-terminal stretch at 1–16 (MWSLLLLAALVGQGFA) is a signal peptide. Over 17–484 (LKNVFDMRIQ…PGFHGWATAA (468 aa)) the chain is Lumenal. 10 cysteine pairs are disulfide-bonded: Cys-61/Cys-155, Cys-107/Cys-126, Cys-131/Cys-136, Cys-173/Cys-183, Cys-208/Cys-245, Cys-232/Cys-349, Cys-374/Cys-433, Cys-378/Cys-387, Cys-403/Cys-422, and Cys-450/Cys-473. The N-linked (GlcNAc...) asparagine; by host glycan is linked to Asn-132. 2 N-linked (GlcNAc...) asparagine; by host glycosylation sites follow: Asn-233 and Asn-345. Asn-397 carries an N-linked (GlcNAc...) asparagine; by host glycan. The chain crosses the membrane as a helical span at residues 485 to 504 (LLITFCFGWVLIPACTLAIL). Residues 505–626 (LVLKFFANIL…NLFRYKSRCY (122 aa)) lie on the Cytoplasmic side of the membrane. Residues 514–531 (LHTSNQENRFKAILRKIK) are binding to the ribonucleoprotein. 2 consecutive CCHC-type zinc fingers follow at residues 543 to 563 (CEIC…NLSC) and 568 to 589 (CPYC…YKVC). Binding to the ribonucleoprotein stretches follow at residues 586–603 (YKVC…KKTV), 590–601 (QATHRFREDLKK), and 609–623 (GPGC…RYKS). The region spanning 609 to 632 (GPGCYRTLNLFRYKSRCYILTMWT) is the ITAM domain. The short motif at 613 to 616 (YRTL) is the YxxL element. Residues 627-647 (ILTMWTLLLIIESILWAASAA) traverse the membrane as a helical segment. The Lumenal portion of the chain corresponds to 648 to 1105 (EIPLVPLWTD…VMGIINGNWV (458 aa)). 8 disulfide bridges follow: Cys-733–Cys-768, Cys-737–Cys-775, Cys-749–Cys-883, Cys-763–Cys-894, Cys-778–Cys-902, Cys-804–Cys-813, Cys-821–Cys-830, and Cys-861–Cys-865. Residues 755–775 (YEYENSWACNPPDCPGVGTGC) are fusion loop. N-linked (GlcNAc...) asparagine; by host glycosylation is present at Asn-926. Disulfide bonds link Cys-968–Cys-998, Cys-991–Cys-1043, Cys-1008–Cys-1013, Cys-1044–Cys-1049, and Cys-1083–Cys-1087. A helical transmembrane segment spans residues 1106–1125 (VLIVLCVLLLFSLILLSILC). The tract at residues 1120-1133 (LLSILCPVRKHKKS) is binding to the ribonucleoprotein. The Cytoplasmic segment spans residues 1126-1133 (PVRKHKKS).

This sequence belongs to the hantavirus envelope glycoprotein family. In terms of assembly, homodimer. Homotetramer; forms heterotetrameric Gn-Gc spikes in the pre-fusion conformation. Interacts (via C-terminus) with the nucleoprotein. Interacts with host TUFM; this interaction contributes to the virus-induced degradation of mitochondria by autophagy, which leads to degradation of host MAVS and inhibition of type I interferon (IFN) responses. Interacts with host MAP1LC3B; this interaction contributes to the virus-induced degradation of mitochondria by autophagy, which leads to degradation of host MAVS and inhibition of type I interferon (IFN) responses. As to quaternary structure, homodimer. Homotetramer; forms heterotetrameric Gn-Gc spikes in the pre-fusion conformation. Homotrimer; forms homotrimer in the post-fusion conformation at acidic pH. Interacts (via C-terminus) with the nucleoprotein. In terms of processing, envelope polyprotein precursor is quickly cleaved in vivo just after synthesis, presumably by host signal peptidase.

The protein resides in the virion membrane. It is found in the host cell surface. Its subcellular location is the host Golgi apparatus membrane. The protein localises to the host endoplasmic reticulum membrane. It localises to the host mitochondrion. Functionally, forms homotetramers with glycoprotein C at the surface of the virion. Attaches the virion to host cell receptors including integrin ITGAV/ITGB3. This attachment induces virion internalization predominantly through clathrin-dependent endocytosis. Mediates the assembly and budding of infectious virus particles through its interaction with the nucleocapsid protein and the viral genome. May dysregulate normal immune and endothelial cell responses through an ITAM motif. Translocates to mitochondria, binds to host TUFM and recruits MAP1LC3B. These interactions induce mitochondrial autophagy and therefore destruction of host MAVS leading to inhibition of type I interferon (IFN) responses. Concomitant breakdown of glycoprotein N is apparently prevented by the nucleoprotein that may inhibit Gn-stimulated autophagosome-lysosome fusion. Interacts with the viral genomic RNA. Forms homotetramers with glycoprotein N at the surface of the virion. Attaches the virion to host cell receptors including integrin ITGAV/ITGB3. This attachment induces virion internalization predominantly through clathrin-dependent endocytosis. Class II fusion protein that promotes fusion of viral membrane with host endosomal membrane after endocytosis of the virion. The protein is Envelopment polyprotein (GP) of Homo sapiens (Human).